We begin with the raw amino-acid sequence, 283 residues long: Aspartate dehydrogenase domain-containing protein (283 aa).

S20 and S168 each carry phosphoserine.

The protein belongs to the L-aspartate dehydrogenase family.

The chain is Aspartate dehydrogenase domain-containing protein from Homo sapiens (Human).